Reading from the N-terminus, the 506-residue chain is MSFSVDVLAGIAIELQSGIGHQDRFQRLITTLRQVLECDASALLRYEGRQFIPLAIDGLAQDVLGRRFTLEGHPRLEAIARAGDVVRFPADSDLPDPYDGLIPDQESLKVHACIGLPLFAGQTLIGALTLDGMEPDQFDVFSDEELRLIAALAAGALSNALLIEQLESQNMLPGSSASFEQVKETQMIGLSPNMMQLKKEIEIVAGSDLNVLISGETGTGKELVAKAIHEGSPRAVNPLVYLNCAALPESVAESELFGHVKGAFTGAISNRSGKFEMADNGTLFLDEIGELSLALQAKLLRVLQYGDIQRVGDDRSLRVDVRVLAATNRDLREEVLAGRFRADLFHRLSVFPLSVPPLRERGEDVVLLAGYFCEQCRLRLGLSRVVLSPGARSHLLSYGWPGNVRELEHAIHRAVVLARATRAGDEVVLEAQHFALQEEVSPALPDDSTPTLPANHNLRDATEAFQREMIRRALAQNNHNWAACARALETDVANLHRLAKRLGLKS.

4-aspartylphosphate is present on Asp-57. Residues 187–416 enclose the Sigma-54 factor interaction domain; that stretch reads MIGLSPNMMQ…LEHAIHRAVV (230 aa). ATP-binding positions include 215 to 222 and 278 to 287; these read GETGTGKE and ADNGTLFLDE. A DNA-binding region (H-T-H motif) is located at residues 481-500; sequence WAACARALETDVANLHRLAK.

It participates in nitrogen metabolism; nitric oxide reduction. In terms of biological role, required for the expression of anaerobic nitric oxide (NO) reductase, acts as a transcriptional activator for at least the norVW operon. Activation also requires sigma-54. This chain is Anaerobic nitric oxide reductase transcription regulator NorR, found in Citrobacter koseri (strain ATCC BAA-895 / CDC 4225-83 / SGSC4696).